Consider the following 279-residue polypeptide: Tryptophan synthase alpha chain (279 aa).

Catalysis depends on proton acceptor residues Glu-50 and Asp-61.

Belongs to the TrpA family. As to quaternary structure, tetramer of two alpha and two beta chains.

It catalyses the reaction (1S,2R)-1-C-(indol-3-yl)glycerol 3-phosphate + L-serine = D-glyceraldehyde 3-phosphate + L-tryptophan + H2O. Its pathway is amino-acid biosynthesis; L-tryptophan biosynthesis; L-tryptophan from chorismate: step 5/5. Its function is as follows. The alpha subunit is responsible for the aldol cleavage of indoleglycerol phosphate to indole and glyceraldehyde 3-phosphate. This Azorhizobium caulinodans (strain ATCC 43989 / DSM 5975 / JCM 20966 / LMG 6465 / NBRC 14845 / NCIMB 13405 / ORS 571) protein is Tryptophan synthase alpha chain.